The following is a 147-amino-acid chain: METLTAISRWLAKQHVVTWCVQQEGELWCANAFYLFDAQKVAFYILTEEKTRHAQMSGPQAAVAGTVNGQPKTVALIRGVQFKGEIRRLEGEESDLARKAYNRRFPVARMLSAPVWEIRLDEIKFTDNTLGFGKKMIWLRDSGTEQA.

It belongs to the UPF0306 family.

The chain is UPF0306 protein YhbP from Escherichia coli O8 (strain IAI1).